A 387-amino-acid chain; its full sequence is Putative odorant receptor 19b (387 aa).

Residues 1–40 are Cytoplasmic-facing; the sequence is MDISKVDSTRALVNHWRIFRIMGIHPPGKRTFWGRHYTAY. Residues 41 to 61 form a helical membrane-spanning segment; sequence SMVWNVTFHICIWVSFSVNLL. Over 62-71 the chain is Extracellular; sequence QSNSLETFCE. The chain crosses the membrane as a helical span at residues 72 to 92; sequence SLCVTMPHTLYMLKLINVRRM. At 93–127 the chain is on the cytoplasmic side; sequence RGEMISSHWLLRLLDKRLGCADERQIIMAGIERAE. A helical membrane pass occupies residues 128 to 148; that stretch reads FIFRTIFRGLACTVVLGIIYI. The Extracellular portion of the chain corresponds to 149–171; it reads SASSEPTLMYPTWIPWNWKDSTS. A helical transmembrane segment spans residues 172–192; the sequence is AYLATAMLHTTALMANATLVL. Residues 193-254 are Cytoplasmic-facing; that stretch reads NLSSYPGTYL…LRLFKSLERS (62 aa). The chain crosses the membrane as a helical span at residues 255 to 275; that stretch reads LSMTCFLQFFSTACAQCTICY. Topologically, residues 276-285 are extracellular; sequence FLLFGNVGIM. A helical transmembrane segment spans residues 286-306; the sequence is RFMNMLFLLVILTTETLLLCY. Topologically, residues 307–336 are cytoplasmic; sequence TAELPCKEGESLLTAVYSCNWLSQSVNFRR. Residues 337-357 traverse the membrane as a helical segment; it reads LLLLMLARCQIPMILVSGVIV. Over 358-387 the chain is Extracellular; the sequence is PISMKTFTVMIKGAYTMLTLLNEIRKTSLE.

Belongs to the insect chemoreceptor superfamily. Heteromeric odorant receptor channel (TC 1.A.69) family. Or2a subfamily. As to quaternary structure, interacts with Orco. Complexes exist early in the endomembrane system in olfactory sensory neurons (OSNs), coupling these complexes to the conserved ciliary trafficking pathway.

It is found in the cell membrane. Its function is as follows. Odorant receptor which mediates acceptance or avoidance behavior, depending on its substrates. The odorant receptor repertoire encodes a large collection of odor stimuli that vary widely in identity, intensity, and duration. May form a complex with Orco to form odorant-sensing units, providing sensitive and prolonged odorant signaling and calcium permeability. The chain is Putative odorant receptor 19b from Drosophila melanogaster (Fruit fly).